Reading from the N-terminus, the 129-residue chain is Small ribosomal subunit protein uS11 (129 aa).

The protein belongs to the universal ribosomal protein uS11 family. Part of the 30S ribosomal subunit. Interacts with proteins S7 and S18. Binds to IF-3.

In terms of biological role, located on the platform of the 30S subunit, it bridges several disparate RNA helices of the 16S rRNA. Forms part of the Shine-Dalgarno cleft in the 70S ribosome. The chain is Small ribosomal subunit protein uS11 from Staphylococcus haemolyticus (strain JCSC1435).